The primary structure comprises 176 residues: CASP-like protein 5A1 (176 aa).

Topologically, residues 1-35 (MNPSHPAVHPVEAPPTDVHHAPRVRMKDYQGMPGT) are cytoplasmic. The chain crosses the membrane as a helical span at residues 36–56 (LGGLALRLGQFCFAVVAFSIM). The Extracellular segment spans residues 57–67 (LSTDDFSTVTA). The chain crosses the membrane as a helical span at residues 68 to 88 (FCYLVAATVLQCLWSLALAVI). At 89 to 102 (DGYALLVKRSLRNS) the chain is on the cytoplasmic side. The chain crosses the membrane as a helical span at residues 103–123 (LVVSLFVVGDGVTATLTFAAA). Residues 124–152 (CASAGITVLIGNDLRECDQNHCGKYETAT) are Extracellular-facing. A helical membrane pass occupies residues 153–173 (AMAFLSWFMVSPSFLLTFWLL). The Cytoplasmic portion of the chain corresponds to 174 to 176 (ASR).

This sequence belongs to the Casparian strip membrane proteins (CASP) family. In terms of assembly, homodimer and heterodimers.

It is found in the cell membrane. The chain is CASP-like protein 5A1 from Ginkgo biloba (Ginkgo).